We begin with the raw amino-acid sequence, 133 residues long: Small ribosomal subunit protein uS9 (133 aa).

The protein belongs to the universal ribosomal protein uS9 family.

The protein is Small ribosomal subunit protein uS9 of Picrophilus torridus (strain ATCC 700027 / DSM 9790 / JCM 10055 / NBRC 100828 / KAW 2/3).